A 284-amino-acid chain; its full sequence is Formamidopyrimidine-DNA glycosylase (284 aa).

Residue Pro-2 is the Schiff-base intermediate with DNA of the active site. The active-site Proton donor is the Glu-3. Lys-61 functions as the Proton donor; for beta-elimination activity in the catalytic mechanism. DNA-binding residues include His-95, Arg-115, and Arg-157. Residues 243-277 form an FPG-type zinc finger; the sequence is AVYGRAGQPCRRCGTAIVREPFMNRSSFRCPACQP. Arg-267 serves as the catalytic Proton donor; for delta-elimination activity.

Belongs to the FPG family. Monomer. The cofactor is Zn(2+).

The enzyme catalyses Hydrolysis of DNA containing ring-opened 7-methylguanine residues, releasing 2,6-diamino-4-hydroxy-5-(N-methyl)formamidopyrimidine.. It carries out the reaction 2'-deoxyribonucleotide-(2'-deoxyribose 5'-phosphate)-2'-deoxyribonucleotide-DNA = a 3'-end 2'-deoxyribonucleotide-(2,3-dehydro-2,3-deoxyribose 5'-phosphate)-DNA + a 5'-end 5'-phospho-2'-deoxyribonucleoside-DNA + H(+). Functionally, involved in base excision repair of DNA damaged by oxidation or by mutagenic agents. Acts as a DNA glycosylase that recognizes and removes damaged bases. Has a preference for oxidized purines, such as 7,8-dihydro-8-oxoguanine (8-oxoG). Has AP (apurinic/apyrimidinic) lyase activity and introduces nicks in the DNA strand. Cleaves the DNA backbone by beta-delta elimination to generate a single-strand break at the site of the removed base with both 3'- and 5'-phosphates. The chain is Formamidopyrimidine-DNA glycosylase from Acidothermus cellulolyticus (strain ATCC 43068 / DSM 8971 / 11B).